Consider the following 783-residue polypeptide: MAACRYCCSCLRLRPLSDGPFLLPRRDRALTQLQVRALWSSAGSRAVAVDLGNRKLEISSGKLARFADGSAVVQSGDTAVMVTAVSKTKPSPSQFMPLVVDYRQKAAAAGRIPTNYLRREIGTSDKEILTSRIIDRSIRPLFPAGYFYDTQVLCNLLAVDGVNEPDVLAINGASVALSLSDIPWNGPVGAVRIGIIDGEYVVNPTRKEMSSSTLNLVVAGAPKSQIVMLEASAENILQQDFCHAIKVGVKYTQQIIQGIQQLVKETGVTKRTPQKLFTPSPEIVKYTHKLAMERLYAVFTDYEHDKVSRDEAVNKIRLDTEEQLKEKFPEADPYEIIESFNVVAKEVFRSIVLNEYKRCDGRDLTSLRNVSCEVDMFKTLHGSALFQRGQTQVLCTVTFDSLESGIKSDQVITAINGIKDKNFMLHYEFPPYATNEIGKVTGLNRRELGHGALAEKALYPVIPRDFPFTIRVTSEVLESNGSSSMASACGGSLALMDSGVPISSAVAGVAIGLVTKTDPEKGEIEDYRLLTDILGIEDYNGDMDFKIAGTNKGITALQADIKLPGIPIKIVMEAIQQASVAKKEILQIMNKTISKPRASRKENGPVVETVQVPLSKRAKFVGPGGYNLKKLQAETGVTISQVDEETFSVFAPTPSAMHEARDFITEICKDDQEQQLEFGAVYTATITEIRDTGVMVKLYPNMTAVLLHNTQLDQRKIKHPTALGLEVGQEIQVKYFGRDPADGRMRLSRKVLQSPATTVVRTLNDRSSIVMGEPISQSSSNSQ.

The transit peptide at 1–45 (MAACRYCCSCLRLRPLSDGPFLLPRRDRALTQLQVRALWSSAGSR) directs the protein to the mitochondrion. An N6-acetyllysine mark is found at Lys-250, Lys-264, Lys-285, and Lys-289. Lys-552 bears the N6-succinyllysine mark. In terms of domain architecture, KH spans 605–664 (PVVETVQVPLSKRAKFVGPGGYNLKKLQAETGVTISQVDEETFSVFAPTPSAMHEARDFI). In terms of domain architecture, S1 motif spans 679-750 (GAVYTATITE…ADGRMRLSRK (72 aa)). Ser-754 and Ser-782 each carry phosphoserine.

The protein belongs to the polyribonucleotide nucleotidyltransferase family. Homotrimer; in free form. Homooligomer. Component of the mitochondrial degradosome (mtEXO) complex which is a heteropentamer containing 2 copies of SUPV3L1 and 3 copies of PNPT1. As part of the mitochondrial degradosome complex, interacts with GRSF1 in an RNA-dependent manner; the interaction enhances the activity of the complex. Interacts with TCL1A; the interaction has no effect on PNPT1 exonuclease activity.

It localises to the cytoplasm. The protein resides in the mitochondrion matrix. The protein localises to the mitochondrion intermembrane space. It catalyses the reaction RNA(n+1) + phosphate = RNA(n) + a ribonucleoside 5'-diphosphate. In terms of biological role, RNA-binding protein implicated in numerous RNA metabolic processes. Catalyzes the phosphorolysis of single-stranded polyribonucleotides processively in the 3'-to-5' direction. Mitochondrial intermembrane factor with RNA-processing exoribonulease activity. Component of the mitochondrial degradosome (mtEXO) complex, that degrades 3' overhang double-stranded RNA with a 3'-to-5' directionality in an ATP-dependent manner. Involved in the degradation of non-coding mitochondrial transcripts (MT-ncRNA) and tRNA-like molecules. Required for correct processing and polyadenylation of mitochondrial mRNAs. Plays a role as a cytoplasmic RNA import factor that mediates the translocation of small RNA components, like the 5S RNA, the RNA subunit of ribonuclease P and the mitochondrial RNA-processing (MRP) RNA, into the mitochondrial matrix. Plays a role in mitochondrial morphogenesis and respiration; regulates the expression of the electron transport chain (ETC) components at the mRNA and protein levels. In the cytoplasm, shows a 3'-to-5' exoribonuclease mediating mRNA degradation activity; degrades c-myc mRNA upon treatment with IFNB1/IFN-beta, resulting in a growth arrest in melanoma cells. Regulates the stability of specific mature miRNAs in melanoma cells; specifically and selectively degrades miR-221, preferentially. Also plays a role in RNA cell surveillance by cleaning up oxidized RNAs. Binds to the RNA subunit of ribonuclease P, MRP RNA and miR-221 microRNA. The protein is Polyribonucleotide nucleotidyltransferase 1, mitochondrial of Homo sapiens (Human).